A 341-amino-acid polypeptide reads, in one-letter code: Glycerol-3-phosphate dehydrogenase [NAD(P)+] (341 aa).

The NADPH site is built by Ser11, Trp12, Arg33, and Lys106. The sn-glycerol 3-phosphate site is built by Lys106, Gly137, and Ser139. NADPH is bound at residue Ala141. 5 residues coordinate sn-glycerol 3-phosphate: Lys192, Asp245, Ser255, Arg256, and Asn257. Lys192 acts as the Proton acceptor in catalysis. Arg256 serves as a coordination point for NADPH. Residues Val280 and Glu282 each contribute to the NADPH site.

This sequence belongs to the NAD-dependent glycerol-3-phosphate dehydrogenase family.

It localises to the cytoplasm. It catalyses the reaction sn-glycerol 3-phosphate + NAD(+) = dihydroxyacetone phosphate + NADH + H(+). It carries out the reaction sn-glycerol 3-phosphate + NADP(+) = dihydroxyacetone phosphate + NADPH + H(+). It functions in the pathway membrane lipid metabolism; glycerophospholipid metabolism. Functionally, catalyzes the reduction of the glycolytic intermediate dihydroxyacetone phosphate (DHAP) to sn-glycerol 3-phosphate (G3P), the key precursor for phospholipid synthesis. The protein is Glycerol-3-phosphate dehydrogenase [NAD(P)+] of Bacillus cytotoxicus (strain DSM 22905 / CIP 110041 / 391-98 / NVH 391-98).